Consider the following 240-residue polypeptide: Myogenic factor 6 (240 aa).

A bHLH domain is found at 91 to 142 (DRRKAATLRERRRLKKINEAFEALKRRTVANPNQRLPKVEILRSAINYIERL).

Efficient DNA binding requires dimerization with another bHLH protein. Skeletal muscle.

It localises to the nucleus. Its function is as follows. Involved in muscle differentiation (myogenic factor). Induces fibroblasts to differentiate into myoblasts. Probable sequence specific DNA-binding protein. The protein is Myogenic factor 6 (myf6) of Xenopus laevis (African clawed frog).